We begin with the raw amino-acid sequence, 186 residues long: Peptidyl-tRNA hydrolase (186 aa).

Y14 is a tRNA binding site. H19 acts as the Proton acceptor in catalysis. TRNA is bound by residues F64, N66, and N112.

This sequence belongs to the PTH family. Monomer.

It is found in the cytoplasm. The catalysed reaction is an N-acyl-L-alpha-aminoacyl-tRNA + H2O = an N-acyl-L-amino acid + a tRNA + H(+). In terms of biological role, hydrolyzes ribosome-free peptidyl-tRNAs (with 1 or more amino acids incorporated), which drop off the ribosome during protein synthesis, or as a result of ribosome stalling. Catalyzes the release of premature peptidyl moieties from peptidyl-tRNA molecules trapped in stalled 50S ribosomal subunits, and thus maintains levels of free tRNAs and 50S ribosomes. The protein is Peptidyl-tRNA hydrolase of Listeria monocytogenes serotype 4b (strain CLIP80459).